The sequence spans 409 residues: Histidine--tRNA ligase (409 aa).

The protein belongs to the class-II aminoacyl-tRNA synthetase family. As to quaternary structure, homodimer.

The protein resides in the cytoplasm. It carries out the reaction tRNA(His) + L-histidine + ATP = L-histidyl-tRNA(His) + AMP + diphosphate + H(+). This is Histidine--tRNA ligase from Campylobacter fetus subsp. fetus (strain 82-40).